Here is a 162-residue protein sequence, read N- to C-terminus: Large ribosomal subunit protein uL10 (162 aa).

It belongs to the universal ribosomal protein uL10 family. In terms of assembly, part of the ribosomal stalk of the 50S ribosomal subunit. The N-terminus interacts with L11 and the large rRNA to form the base of the stalk. The C-terminus forms an elongated spine to which L12 dimers bind in a sequential fashion forming a multimeric L10(L12)X complex.

Its function is as follows. Forms part of the ribosomal stalk, playing a central role in the interaction of the ribosome with GTP-bound translation factors. This Borreliella burgdorferi (strain ATCC 35210 / DSM 4680 / CIP 102532 / B31) (Borrelia burgdorferi) protein is Large ribosomal subunit protein uL10 (rplJ).